The sequence spans 92 residues: Acylphosphatase (92 aa).

An Acylphosphatase-like domain is found at 5–90; that stretch reads TWRLVAHGRV…GEFAGFEFRP (86 aa). Catalysis depends on residues Arg20 and Asn38.

The protein belongs to the acylphosphatase family.

It catalyses the reaction an acyl phosphate + H2O = a carboxylate + phosphate + H(+). The sequence is that of Acylphosphatase (acyP) from Cupriavidus necator (strain ATCC 17699 / DSM 428 / KCTC 22496 / NCIMB 10442 / H16 / Stanier 337) (Ralstonia eutropha).